A 419-amino-acid chain; its full sequence is Serine hydroxymethyltransferase (419 aa).

(6S)-5,6,7,8-tetrahydrofolate contacts are provided by residues Leu122 and 126-128 (GHL). Lys231 bears the N6-(pyridoxal phosphate)lysine mark. (6S)-5,6,7,8-tetrahydrofolate is bound at residue 354 to 356 (SPF).

This sequence belongs to the SHMT family. Homodimer. The cofactor is pyridoxal 5'-phosphate.

It localises to the cytoplasm. It catalyses the reaction (6R)-5,10-methylene-5,6,7,8-tetrahydrofolate + glycine + H2O = (6S)-5,6,7,8-tetrahydrofolate + L-serine. The protein operates within one-carbon metabolism; tetrahydrofolate interconversion. It participates in amino-acid biosynthesis; glycine biosynthesis; glycine from L-serine: step 1/1. In terms of biological role, catalyzes the reversible interconversion of serine and glycine with tetrahydrofolate (THF) serving as the one-carbon carrier. This reaction serves as the major source of one-carbon groups required for the biosynthesis of purines, thymidylate, methionine, and other important biomolecules. Also exhibits THF-independent aldolase activity toward beta-hydroxyamino acids, producing glycine and aldehydes, via a retro-aldol mechanism. The polypeptide is Serine hydroxymethyltransferase (Exiguobacterium sibiricum (strain DSM 17290 / CCUG 55495 / CIP 109462 / JCM 13490 / 255-15)).